Reading from the N-terminus, the 50-residue chain is Insulin-1 (50 aa).

Intrachain disulfides connect cysteine 7-cysteine 36, cysteine 19-cysteine 49, and cysteine 35-cysteine 40.

The protein belongs to the insulin family. As to quaternary structure, heterodimer of a B chain and an A chain linked by two disulfide bonds.

It is found in the secreted. In terms of biological role, insulin decreases blood glucose concentration. It increases cell permeability to monosaccharides, amino acids and fatty acids. It accelerates glycolysis, the pentose phosphate cycle, and glycogen synthesis in liver. The chain is Insulin-1 from Katsuwonus pelamis (Skipjack tuna).